The following is a 321-amino-acid chain: uncharacterized protein (321 aa).

Positions 1–56 (MANIKDIAEKAGVSVTTVSRVINNHPYVSEDKRKRVFEAMESLEYTRNIHAVHLSK) constitute an HTH lacI-type domain. Residues 4-23 (IKDIAEKAGVSVTTVSRVIN) constitute a DNA-binding region (H-T-H motif).

This is an uncharacterized protein from Bacillus subtilis (strain 168).